We begin with the raw amino-acid sequence, 359 residues long: Dual-specificity RNA methyltransferase RlmN (359 aa).

Catalysis depends on Glu-90, which acts as the Proton acceptor. The region spanning 109 to 342 (HQERYTVCIS…CTIRESKGLD (234 aa)) is the Radical SAM core domain. Cysteines 116 and 347 form a disulfide. 3 residues coordinate [4Fe-4S] cluster: Cys-123, Cys-127, and Cys-130. S-adenosyl-L-methionine-binding positions include 173–174 (GE), Ser-205, 228–230 (SLH), and Asn-304. Residue Cys-347 is the S-methylcysteine intermediate of the active site.

It belongs to the radical SAM superfamily. RlmN family. It depends on [4Fe-4S] cluster as a cofactor.

The protein resides in the cytoplasm. It catalyses the reaction adenosine(2503) in 23S rRNA + 2 reduced [2Fe-2S]-[ferredoxin] + 2 S-adenosyl-L-methionine = 2-methyladenosine(2503) in 23S rRNA + 5'-deoxyadenosine + L-methionine + 2 oxidized [2Fe-2S]-[ferredoxin] + S-adenosyl-L-homocysteine. The enzyme catalyses adenosine(37) in tRNA + 2 reduced [2Fe-2S]-[ferredoxin] + 2 S-adenosyl-L-methionine = 2-methyladenosine(37) in tRNA + 5'-deoxyadenosine + L-methionine + 2 oxidized [2Fe-2S]-[ferredoxin] + S-adenosyl-L-homocysteine. Specifically methylates position 2 of adenine 2503 in 23S rRNA and position 2 of adenine 37 in tRNAs. m2A2503 modification seems to play a crucial role in the proofreading step occurring at the peptidyl transferase center and thus would serve to optimize ribosomal fidelity. The sequence is that of Dual-specificity RNA methyltransferase RlmN from Sulfurovum sp. (strain NBC37-1).